We begin with the raw amino-acid sequence, 727 residues long: MSMHFRNKAWIILAILCFSSLIHSTEAVVTYDHKALIINGQRRILISGSIHYPRSTPEMWPDLIKKAKEGGLDVIQTYVFWNGHEPSPGNYYFQDRYDLVKFTKLVHQAGLYLDLRIGPYVCAEWNFGGFPVWLKYVPGMVFRTDNEPFKIAMQKFTKKIVDMMKEEKLFETQGGPIILSQIENEYGPMQWEMGAAGKAYSKWTAEMALGLSTGVPWIMCKQEDAPYPIIDTCNGFYCEGFKPNSDNKPKLWTENWTGWFTEFGGAIPNRPVEDIAFSVARFIQNGGSFMNYYMYYGGTNFDRTAGVFIATSYDYDAPIDEYGLLREPKYSHLKELHKVIKLCEPALVSVDPTITSLGDKQEIHVFKSKTSCAAFLSNYDTSSAARVMFRGFPYDLPPWSVSILPDCKTEYYNTAKIRAPTILMKMIPTSTKFSWESYNEGSPSSNEAGTFVKDGLVEQISMTRDKTDYFWYFTDITIGSDESFLKTGDNPLLTIFSAGHALHVFVNGLLAGTSYGALSNSKLTFSQNIKLSVGINKLALLSTAVGLPNAGVHYETWNTGILGPVTLKGVNSGTWDMSKWKWSYKIGLRGEAMSLHTLAGSSAVKWWIKGFVVKKQPLTWYKSSFDTPRGNEPLALDMNTMGKGQVWVNGHNIGRHWPAYTARGNCGRCNYAGIYNEKKCLSHCGEPSQRWYHVPRSWLKPFGNLLVIFEEWGGDPSGISLVKRTAK.

A signal peptide spans Met1–Ala27. Glu185 acts as the Proton donor in catalysis. Glu254 serves as the catalytic Nucleophile. Asn255 carries an N-linked (GlcNAc...) asparagine glycan.

The protein belongs to the glycosyl hydrolase 35 family. In terms of tissue distribution, ubiquitous, with higher expression levels in roots and siliques.

The protein resides in the secreted. Its subcellular location is the extracellular space. The protein localises to the apoplast. It catalyses the reaction Hydrolysis of terminal non-reducing beta-D-galactose residues in beta-D-galactosides.. The polypeptide is Beta-galactosidase 2 (BGAL2) (Arabidopsis thaliana (Mouse-ear cress)).